The following is a 354-amino-acid chain: DNA polymerase IV (354 aa).

The 182-residue stretch at 7–188 (IIHVDMDCFF…LPLAKIPGVG (182 aa)) folds into the UmuC domain. Positions 11 and 106 each coordinate Mg(2+). Residue glutamate 107 is part of the active site.

Belongs to the DNA polymerase type-Y family. As to quaternary structure, monomer. Mg(2+) is required as a cofactor.

It localises to the cytoplasm. The enzyme catalyses DNA(n) + a 2'-deoxyribonucleoside 5'-triphosphate = DNA(n+1) + diphosphate. Poorly processive, error-prone DNA polymerase involved in untargeted mutagenesis. Copies undamaged DNA at stalled replication forks, which arise in vivo from mismatched or misaligned primer ends. These misaligned primers can be extended by PolIV. Exhibits no 3'-5' exonuclease (proofreading) activity. May be involved in translesional synthesis, in conjunction with the beta clamp from PolIII. In Shigella boydii serotype 18 (strain CDC 3083-94 / BS512), this protein is DNA polymerase IV.